Here is a 214-residue protein sequence, read N- to C-terminus: Thiamine-phosphate synthase (214 aa).

4-amino-2-methyl-5-(diphosphooxymethyl)pyrimidine-binding positions include 39 to 43 and Asn71; that span reads QYRFK. Positions 72 and 91 each coordinate Mg(2+). Ser110 is a 4-amino-2-methyl-5-(diphosphooxymethyl)pyrimidine binding site. 136-138 lines the 2-[(2R,5Z)-2-carboxy-4-methylthiazol-5(2H)-ylidene]ethyl phosphate pocket; that stretch reads TKT. Lys139 lines the 4-amino-2-methyl-5-(diphosphooxymethyl)pyrimidine pocket. 2-[(2R,5Z)-2-carboxy-4-methylthiazol-5(2H)-ylidene]ethyl phosphate contacts are provided by residues Gly166 and 186–187; that span reads VS.

It belongs to the thiamine-phosphate synthase family. Mg(2+) is required as a cofactor.

It carries out the reaction 2-[(2R,5Z)-2-carboxy-4-methylthiazol-5(2H)-ylidene]ethyl phosphate + 4-amino-2-methyl-5-(diphosphooxymethyl)pyrimidine + 2 H(+) = thiamine phosphate + CO2 + diphosphate. It catalyses the reaction 2-(2-carboxy-4-methylthiazol-5-yl)ethyl phosphate + 4-amino-2-methyl-5-(diphosphooxymethyl)pyrimidine + 2 H(+) = thiamine phosphate + CO2 + diphosphate. The catalysed reaction is 4-methyl-5-(2-phosphooxyethyl)-thiazole + 4-amino-2-methyl-5-(diphosphooxymethyl)pyrimidine + H(+) = thiamine phosphate + diphosphate. It functions in the pathway cofactor biosynthesis; thiamine diphosphate biosynthesis; thiamine phosphate from 4-amino-2-methyl-5-diphosphomethylpyrimidine and 4-methyl-5-(2-phosphoethyl)-thiazole: step 1/1. In terms of biological role, condenses 4-methyl-5-(beta-hydroxyethyl)thiazole monophosphate (THZ-P) and 2-methyl-4-amino-5-hydroxymethyl pyrimidine pyrophosphate (HMP-PP) to form thiamine monophosphate (TMP). This Hydrogenobaculum sp. (strain Y04AAS1) protein is Thiamine-phosphate synthase.